Here is a 516-residue protein sequence, read N- to C-terminus: uncharacterized protein (516 aa).

The first 22 residues, 1-22 (MLYRFWKTGLAIFMPGCILLSS), serve as a signal peptide directing secretion. Cys-23 carries N-palmitoyl cysteine lipidation. The S-diacylglycerol cysteine moiety is linked to residue Cys-23.

It belongs to the MG067/MG068/MG395 family.

Its subcellular location is the cell membrane. This is an uncharacterized protein from Mycoplasma genitalium (strain ATCC 33530 / DSM 19775 / NCTC 10195 / G37) (Mycoplasmoides genitalium).